The sequence spans 218 residues: Glutathione S-transferase class-mu 26 kDa isozyme (218 aa).

Positions 1–83 constitute a GST N-terminal domain; that stretch reads MAPKFGYWKV…YIADKHNMLG (83 aa). Residues 7–8, 41–45, 54–55, and 67–68 each bind glutathione; these read YW, WSNDK, NL, and QS. In terms of domain architecture, GST C-terminal spans 85-203; that stretch reads CPKERAEISM…NSSRYIKWPL (119 aa). Substrate is bound at residue tyrosine 111.

Belongs to the GST superfamily. Mu family. As to quaternary structure, homodimer. Tegument and in subtegumentary parenchymal cells. GST 26 may be actively excreted by adult worms.

It catalyses the reaction RX + glutathione = an S-substituted glutathione + a halide anion + H(+). Its function is as follows. Conjugation of reduced glutathione to a wide number of exogenous and endogenous hydrophobic electrophiles. Functionally, GST isoenzymes appear to play a central role in the parasite detoxification system. Other functions are also suspected including a role in increasing the solubility of haematin in the parasite gut. The protein is Glutathione S-transferase class-mu 26 kDa isozyme of Schistosoma mansoni (Blood fluke).